The following is a 295-amino-acid chain: ATP synthase gamma chain (295 aa).

It belongs to the ATPase gamma chain family. F-type ATPases have 2 components, CF(1) - the catalytic core - and CF(0) - the membrane proton channel. CF(1) has five subunits: alpha(3), beta(3), gamma(1), delta(1), epsilon(1). CF(0) has three main subunits: a, b and c.

It is found in the cell inner membrane. Its function is as follows. Produces ATP from ADP in the presence of a proton gradient across the membrane. The gamma chain is believed to be important in regulating ATPase activity and the flow of protons through the CF(0) complex. The chain is ATP synthase gamma chain from Cytophaga hutchinsonii (strain ATCC 33406 / DSM 1761 / CIP 103989 / NBRC 15051 / NCIMB 9469 / D465).